Consider the following 206-residue polypeptide: Ras-related protein Rab-18 (206 aa).

An N-acetylmethionine modification is found at Met1. Residues Ser17, Gly20, Lys21, Ser22, Ser23, Asp34, Pro35, Thr40, Gly66, Lys123, and Asp125 each coordinate GTP. A Mg(2+)-binding site is contributed by Ser22. 2 consecutive short sequence motifs (switch) follow at residues 31 to 45 (DTFD…GVDF) and 63 to 80 (DTAG…YYRG). Thr40 lines the Mg(2+) pocket. Ser144 is subject to Phosphoserine. Residue Ala152 participates in GTP binding. Cys199 is lipidated: S-palmitoyl cysteine. The residue at position 203 (Cys203) is a Cysteine methyl ester. A lipid anchor (S-geranylgeranyl cysteine) is attached at Cys203. Residues 204–206 (SVL) constitute a propeptide, removed in mature form.

The protein belongs to the small GTPase superfamily. Rab family. As to quaternary structure, interacts (in GTP-bound form) with ZFYVE1. Interacts with ZW10 and this interaction is enhanced in the presence of ZFYVE1. Interacts with BSCL2. It depends on Mg(2+) as a cofactor.

The protein localises to the endoplasmic reticulum membrane. The protein resides in the golgi apparatus. It localises to the cis-Golgi network membrane. It is found in the lipid droplet. Its subcellular location is the apical cell membrane. The catalysed reaction is GTP + H2O = GDP + phosphate + H(+). Its activity is regulated as follows. Regulated by guanine nucleotide exchange factors (GEFs) which promote the exchange of bound GDP for free GTP. Regulated by GTPase activating proteins (GAPs) which increase the GTP hydrolysis activity at the ER membrane. Inhibited by GDP dissociation inhibitors (GDIs) which prevent Rab-GDP dissociation. The small GTPases Rab are key regulators of intracellular membrane trafficking, from the formation of transport vesicles to their fusion with membranes. Rabs cycle between an inactive GDP-bound form and an active GTP-bound form that is able to recruit to membranes different sets of downstream effectors directly responsible for vesicle formation, movement, tethering and fusion. RAB18 is required for the localization of ZFYVE1 to lipid droplets and for its function in mediating the formation of endoplasmic reticulum-lipid droplets (ER-LD) contacts. Also required for maintaining endoplasmic reticulum structure. Plays a role in apical endocytosis/recycling. Plays a key role in eye and brain development and neurodegeneration. The chain is Ras-related protein Rab-18 (RAB18) from Bos taurus (Bovine).